The chain runs to 306 residues: Pantothenate kinase (306 aa).

91–98 (GSVAVGKS) contacts ATP.

Belongs to the prokaryotic pantothenate kinase family.

The protein localises to the cytoplasm. It catalyses the reaction (R)-pantothenate + ATP = (R)-4'-phosphopantothenate + ADP + H(+). The protein operates within cofactor biosynthesis; coenzyme A biosynthesis; CoA from (R)-pantothenate: step 1/5. The polypeptide is Pantothenate kinase (Streptococcus thermophilus (strain ATCC BAA-491 / LMD-9)).